A 117-amino-acid chain; its full sequence is MDMRVPAQLLGLLLLWLRGARCDIQMTQSPSSLSASVGDRVTITCRASQSISSYLNWYQQKPGKAPKLLIYAASSLQSGVPSRFSGSGSGTDFTLTISSLQPEDFATYYCQQSYSTP.

An N-terminal signal peptide occupies residues 1 to 22 (MDMRVPAQLLGLLLLWLRGARC). Positions 23-45 (DIQMTQSPSSLSASVGDRVTITC) are framework-1. One can recognise an Ig-like domain in the interval 24–117 (IQMTQSPSSL…YYCQQSYSTP (94 aa)). A disulfide bond links C45 and C110. The complementarity-determining-1 stretch occupies residues 46-56 (RASQSISSYLN). The framework-2 stretch occupies residues 57–71 (WYQQKPGKAPKLLIY). The interval 72-78 (AASSLQS) is complementarity-determining-2. The tract at residues 79-110 (GVPSRFSGSGSGTDFTLTISSLQPEDFATYYC) is framework-3. Residues 111-117 (QQSYSTP) are complementarity-determining-3.

Immunoglobulins are composed of two identical heavy chains and two identical light chains; disulfide-linked.

Its subcellular location is the secreted. It localises to the cell membrane. In terms of biological role, v region of the variable domain of immunoglobulin light chains that participates in the antigen recognition. Immunoglobulins, also known as antibodies, are membrane-bound or secreted glycoproteins produced by B lymphocytes. In the recognition phase of humoral immunity, the membrane-bound immunoglobulins serve as receptors which, upon binding of a specific antigen, trigger the clonal expansion and differentiation of B lymphocytes into immunoglobulins-secreting plasma cells. Secreted immunoglobulins mediate the effector phase of humoral immunity, which results in the elimination of bound antigens. The antigen binding site is formed by the variable domain of one heavy chain, together with that of its associated light chain. Thus, each immunoglobulin has two antigen binding sites with remarkable affinity for a particular antigen. The variable domains are assembled by a process called V-(D)-J rearrangement and can then be subjected to somatic hypermutations which, after exposure to antigen and selection, allow affinity maturation for a particular antigen. The protein is Immunoglobulin kappa variable 1-39 of Homo sapiens (Human).